Consider the following 713-residue polypeptide: Vacuolar amino acid transporter 4 (713 aa).

A disordered region spans residues 1 to 33 (MVTNNGDGEHLGIRRNGNLRHPSNNMKIPRRAQ). At 1 to 242 (MVTNNGDGEH…IDKVPFLTRN (242 aa)) the chain is on the vacuolar side. A compositionally biased stretch (polar residues) spans 21–33 (HPSNNMKIPRRAQ). The residue at position 88 (serine 88) is a Phosphoserine. The tract at residues 99 to 121 (RSSVSHGNEAIPRVNPTKNSSAS) is disordered. 2 positions are modified to phosphoserine: serine 130 and serine 165. The segment at 200 to 233 (KRQEHQLNDSASSDFTSHESDSINQSSPSSNQDI) is disordered. Over residues 221 to 231 (SINQSSPSSNQ) the composition is skewed to low complexity. A helical transmembrane segment spans residues 243–263 (FLEFLYVFGHFAGESFEDDFI). Topologically, residues 264–301 (PDSSNMMIRGEDERSALLSRPDHMKVLPSAKGTTSTKK) are cytoplasmic. The helical transmembrane segment at 302–322 (VFLILLKSFIGTGVLFLPNAF) threads the bilayer. Over 323-326 (HNGG) the chain is Vacuolar. A helical membrane pass occupies residues 327-347 (LFFSVSMLAFFGIYSYWCYYI). Over 348–373 (LVQAKSSCGVSSFGDIGLKLYGPWMR) the chain is Cytoplasmic. The helical transmembrane segment at 374–394 (IIILFSLVITQVGFSGAYMIF) threads the bilayer. The Vacuolar segment spans residues 395 to 410 (TAKNLQAFLDNVFHVG). The helical transmembrane segment at 411–431 (VLPLSYLMVFQTIIFIPLSFI) threads the bilayer. The Cytoplasmic segment spans residues 432–438 (RNISKLS). Residues 439–459 (LPSLLANFFIMAGLVIVIIFT) form a helical membrane-spanning segment. Over 460–483 (AKRLFFDLMGTPAMGVVYGLNADR) the chain is Vacuolar. A helical membrane pass occupies residues 484-504 (WTLFIGTAIFAFEGIGLIIPV). The Cytoplasmic segment spans residues 505 to 515 (QDSMRNPEKFP). A helical transmembrane segment spans residues 516–536 (LVLALVILTATILFISIATLG). The Vacuolar portion of the chain corresponds to 537-561 (YLAYGSNVQTVILLNLPQSNIFVNL). A helical transmembrane segment spans residues 562 to 582 (IQLFYSIAIMLSTPLQLFPAI). Topologically, residues 583–621 (KIIENKFFPKFTKIYVKHDDLTTRVELRPNSGKLNWKIK) are cytoplasmic. The helical transmembrane segment at 622-642 (WLKNFIRSIIVIIVVSIAYFG) threads the bilayer. Residues 643–648 (SDNLDK) are Vacuolar-facing. A helical membrane pass occupies residues 649–669 (FVSVIGSLACIPLVYIYPSML). The Cytoplasmic segment spans residues 670–692 (HLRGNSLPETKGEFWRFKPMLDT). A helical transmembrane segment spans residues 693-711 (ILIFFGIASMLYTSYQSIF). At 712–713 (GV) the chain is on the vacuolar side.

It belongs to the amino acid/polyamine transporter 2 family.

It is found in the vacuole membrane. Its function is as follows. Involved in amino acid efflux from the vacuole to the cytoplasm. Capable of transporting large neutral amino acids including tyrosine, glutamine, asparagine, isoleucine and leucine. The protein is Vacuolar amino acid transporter 4 (AVT4) of Saccharomyces cerevisiae (strain ATCC 204508 / S288c) (Baker's yeast).